The chain runs to 467 residues: Glutamine synthetase (467 aa).

The GS beta-grasp domain occupies 14–98; it reads EEVEYVDIRF…VHCNVVEPDT (85 aa). The GS catalytic domain occupies 106–467; that stretch reads PRGAAVKAEA…PVEYQMYYSC (362 aa). E131 and E133 together coordinate Mg(2+). Residue D209 participates in ATP binding. Positions 214 and 221 each coordinate Mg(2+). L-glutamate-binding positions include 265–266 and G266; that span reads NG. Residue H270 coordinates Mg(2+). Residues 272 to 274 and S274 contribute to the ATP site; that span reads NMS. Residues R320, E326, and R338 each coordinate L-glutamate. The ATP site is built by R338 and R343. E356 is a binding site for Mg(2+). Residue R358 participates in L-glutamate binding. Y396 carries the O-AMP-tyrosine modification.

It belongs to the glutamine synthetase family. In terms of assembly, oligomer of 12 subunits arranged in the form of two hexameric ring. Mg(2+) is required as a cofactor.

The protein localises to the cytoplasm. It carries out the reaction L-glutamate + NH4(+) + ATP = L-glutamine + ADP + phosphate + H(+). With respect to regulation, the activity of this enzyme could be controlled by adenylation under conditions of abundant glutamine. Its function is as follows. Catalyzes the ATP-dependent biosynthesis of glutamine from glutamate and ammonia. The sequence is that of Glutamine synthetase from Cereibacter sphaeroides (Rhodobacter sphaeroides).